The following is a 103-amino-acid chain: L-rhamnose mutarotase (103 aa).

Tyr18 contributes to the substrate binding site. The active-site Proton donor is the His22. Substrate contacts are provided by residues Tyr41 and 76 to 77 (WW).

This sequence belongs to the rhamnose mutarotase family. In terms of assembly, homodimer.

Its subcellular location is the cytoplasm. It catalyses the reaction alpha-L-rhamnose = beta-L-rhamnose. Its pathway is carbohydrate metabolism; L-rhamnose metabolism. In terms of biological role, involved in the anomeric conversion of L-rhamnose. The sequence is that of L-rhamnose mutarotase from Enterococcus faecalis (strain ATCC 700802 / V583).